The chain runs to 303 residues: Recombination-associated protein RdgC (303 aa).

The protein belongs to the RdgC family.

The protein resides in the cytoplasm. It localises to the nucleoid. In terms of biological role, may be involved in recombination. This Shewanella frigidimarina (strain NCIMB 400) protein is Recombination-associated protein RdgC.